The following is a 356-amino-acid chain: Uroporphyrinogen decarboxylase (356 aa).

Substrate contacts are provided by residues 27–31 (RQAGR), aspartate 77, tyrosine 154, serine 209, and histidine 327.

The protein belongs to the uroporphyrinogen decarboxylase family. As to quaternary structure, homodimer.

The protein resides in the cytoplasm. It catalyses the reaction uroporphyrinogen III + 4 H(+) = coproporphyrinogen III + 4 CO2. It functions in the pathway porphyrin-containing compound metabolism; protoporphyrin-IX biosynthesis; coproporphyrinogen-III from 5-aminolevulinate: step 4/4. Functionally, catalyzes the decarboxylation of four acetate groups of uroporphyrinogen-III to yield coproporphyrinogen-III. The chain is Uroporphyrinogen decarboxylase from Aromatoleum aromaticum (strain DSM 19018 / LMG 30748 / EbN1) (Azoarcus sp. (strain EbN1)).